We begin with the raw amino-acid sequence, 353 residues long: Phosphoribosylformylglycinamidine cyclo-ligase (353 aa).

Belongs to the AIR synthase family.

It localises to the cytoplasm. It catalyses the reaction 2-formamido-N(1)-(5-O-phospho-beta-D-ribosyl)acetamidine + ATP = 5-amino-1-(5-phospho-beta-D-ribosyl)imidazole + ADP + phosphate + H(+). Its pathway is purine metabolism; IMP biosynthesis via de novo pathway; 5-amino-1-(5-phospho-D-ribosyl)imidazole from N(2)-formyl-N(1)-(5-phospho-D-ribosyl)glycinamide: step 2/2. This is Phosphoribosylformylglycinamidine cyclo-ligase from Pseudomonas aeruginosa (strain LESB58).